The primary structure comprises 264 residues: Phosphonoacetaldehyde hydrolase (264 aa).

D9 acts as the Nucleophile in catalysis. The Mg(2+) site is built by D9 and A11. K50 functions as the Schiff-base intermediate with substrate in the catalytic mechanism. D183 serves as a coordination point for Mg(2+).

It belongs to the HAD-like hydrolase superfamily. PhnX family. In terms of assembly, homodimer. Mg(2+) serves as cofactor.

The catalysed reaction is phosphonoacetaldehyde + H2O = acetaldehyde + phosphate + H(+). Involved in phosphonate degradation. The protein is Phosphonoacetaldehyde hydrolase (phnX) of Bacillus cereus.